The primary structure comprises 266 residues: 15-hydroxyprostaglandin dehydrogenase [NAD(+)] (266 aa).

Residues 12-20 (GAAQGIGKA), 36-37 (DW), 63-65 (CDV), and Asn91 contribute to the NAD(+) site. Substrate contacts are provided by Ser138 and Gln148. Residue Tyr151 is the Proton acceptor of the active site. NAD(+) is bound by residues 151–155 (YCASK) and 186–188 (VKT).

Belongs to the short-chain dehydrogenases/reductases (SDR) family. In terms of assembly, homodimer.

The protein localises to the cytoplasm. It catalyses the reaction prostaglandin E2 + NAD(+) = 15-oxoprostaglandin E2 + NADH + H(+). The enzyme catalyses (15S)-hydroxy-(5Z,8Z,11Z,13E)-eicosatetraenoate + NAD(+) = 15-oxo-(5Z,8Z,11Z,13E)-eicosatetraenoate + NADH + H(+). The catalysed reaction is (11R)-hydroxy-(5Z,8Z,12E,14Z)-eicosatetraenoate + NAD(+) = 11-oxo-(5Z,8Z,12E,14Z)-eicosatetraenoate + NADH + H(+). It carries out the reaction lipoxin A4 + NAD(+) = 15-oxo-(5S,6R)-dihydroxy-(7E,9E,11Z,13E)-eicosatetraenoate + NADH + H(+). It catalyses the reaction 15-oxo-(5S,6R)-dihydroxy-(7E,9E,11Z)-eicosatrienoate + NADH + H(+) = (5S,6R,15S)-trihydroxy-(7E,9E,11Z)-eicosatrienoate + NAD(+). The enzyme catalyses prostaglandin A1 + NAD(+) = 15-oxo-prostaglandin A1 + NADH + H(+). The catalysed reaction is prostaglandin E1 + NAD(+) = 15-oxoprostaglandin E1 + NADH + H(+). It carries out the reaction 14-hydroxy-(4Z,7Z,10Z,12E,16Z,19Z)-docosahexaenoate + NAD(+) = 14-oxo-(4Z,7Z,10Z,12E,16Z,19Z)-docosahexaenoate + NADH + H(+). It catalyses the reaction resolvin E1 + NAD(+) = 18-oxo-resolvin E1 + NADH + H(+). The enzyme catalyses resolvin D1 + NAD(+) = 8-oxoresolvin D1 + NADH + H(+). The catalysed reaction is resolvin D1 + NAD(+) = 17-oxoresolvin D1 + NADH + H(+). It carries out the reaction resolvin D2 + NAD(+) = 7-oxoresolvin D2 + NADH + H(+). It catalyses the reaction resolvin D2 + NAD(+) = 16-oxoresolvin D2 + NADH + H(+). Catalyzes the NAD-dependent dehydrogenation (oxidation) of a broad array of hydroxylated polyunsaturated fatty acids (mainly eicosanoids and docosanoids, including prostaglandins, lipoxins and resolvins), yielding their corresponding keto (oxo) metabolites. Decreases the levels of the pro-proliferative prostaglandins such as prostaglandin E2 (whose activity is increased in cancer because of an increase in the expression of cyclooxygenase 2) and generates oxo-fatty acid products that can profoundly influence cell function by abrogating pro-inflammatory cytokine expression. Converts resolvins E1, D1 and D2 to their oxo products, which represents a mode of resolvin inactivation. Resolvin E1 plays important roles during the resolution phase of acute inflammation, while resolvins D1 and D2 have a unique role in obesity-induced adipose inflammation. The protein is 15-hydroxyprostaglandin dehydrogenase [NAD(+)] (Hpgd) of Rattus norvegicus (Rat).